A 361-amino-acid chain; its full sequence is MLNEVLKGIEGLDNDMILKAKNRVDSLAKPLGSLGKLEDIAIRLSGITGNMFNNIDKKCVIIMSSDNGVEEEGVASAPQCVTLLQTKNFIKGTTGVATLAKSNGTDLMVFDVGINSDEVVEGVINRKISKGTKNIYKEPAMTYEEAKKSLEIGIEAVKIAKEKGYKILGVGEMGIGNTTTSAAVLKALIGCETSQVVGKGGGINNASFEKKKRIVEEVVKKHNINFDDPIDIISKVGGYDIGAMTGVFLGAAFYRIPVVIDGFISVVAALLANRLNPLVKEFCFTSHKSQEIGYELAIKELGLDPMLDLNMRLGEGSGCPIAFSVIDFATAMMNNMATFEEGNIDNSYLEDVKDEECYIVL.

E315 acts as the Proton acceptor in catalysis.

It belongs to the CobT family.

The catalysed reaction is 5,6-dimethylbenzimidazole + nicotinate beta-D-ribonucleotide = alpha-ribazole 5'-phosphate + nicotinate + H(+). It functions in the pathway nucleoside biosynthesis; alpha-ribazole biosynthesis; alpha-ribazole from 5,6-dimethylbenzimidazole: step 1/2. Its function is as follows. Catalyzes the synthesis of alpha-ribazole-5'-phosphate from nicotinate mononucleotide (NAMN) and 5,6-dimethylbenzimidazole (DMB). The protein is Nicotinate-nucleotide--dimethylbenzimidazole phosphoribosyltransferase of Clostridium perfringens (strain ATCC 13124 / DSM 756 / JCM 1290 / NCIMB 6125 / NCTC 8237 / Type A).